Reading from the N-terminus, the 1377-residue chain is Zinc finger MYM-type protein 2 (1377 aa).

Residues lysine 48, lysine 88, lysine 98, and lysine 104 each participate in a glycyl lysine isopeptide (Lys-Gly) (interchain with G-Cter in SUMO2) cross-link. Composition is skewed to polar residues over residues 85–115 (TSSKNEELQGNDSKITPSSKELASQKGSVSE) and 127–138 (TNQGQEKNSSNF). Residues 85 to 177 (TSSKNEELQG…GMGNSGITTE (93 aa)) are disordered. Residues 139–152 (IERRPPETKNRTND) are compositionally biased toward basic and acidic residues. Lysine 147 is covalently cross-linked (Glycyl lysine isopeptide (Lys-Gly) (interchain with G-Cter in SUMO2)). The segment covering 153-164 (VDFSTSSFSRSK) has biased composition (polar residues). Residue serine 159 is modified to Phosphoserine. Glycyl lysine isopeptide (Lys-Gly) (interchain with G-Cter in SUMO2) cross-links involve residues lysine 253 and lysine 297. The disordered stretch occupies residues 273–305 (NGESATHHNPDSWISQSASFPRNQKQPGVDSLS). Residues 284 to 298 (SWISQSASFPRNQKQ) show a composition bias toward polar residues. A Phosphoserine modification is found at serine 305. Glycyl lysine isopeptide (Lys-Gly) (interchain with G-Cter in SUMO2) cross-links involve residues lysine 312, lysine 325, lysine 348, and lysine 366. The MYM-type 1 zinc finger occupies 327-363 (VKVTCANCKKPLQKGQTAYQRKGSAHLFCSTTCLSSF). Residues 369–409 (PKKLCVMCKKDITTMKGTIVAQVDSSESFQEFCSTSCLSLY) form an MYM-type 2 zinc finger. Glycyl lysine isopeptide (Lys-Gly) (interchain with G-Cter in SUMO2) cross-links involve residues lysine 417, lysine 441, lysine 491, lysine 503, lysine 513, lysine 529, and lysine 532. MYM-type zinc fingers lie at residues 421–456 (NKSRCTICGKLTEIRHEVSFKNMTHKLCSDHCFNRY) and 463–502 (IMNCCEQCGEYLPSKGAGNNVLVIDGQQKRFCCQSCVSEY). The segment at 533 to 570 (LTTCTGCRTQCRFFDMTQCIGPNGYMEPYCSTACMNSH) adopts an MYM-type 5 zinc-finger fold. Residues lysine 576, lysine 603, lysine 649, lysine 658, lysine 688, lysine 700, and lysine 709 each participate in a glycyl lysine isopeptide (Lys-Gly) (interchain with G-Cter in SUMO2) cross-link. Residues 636–671 (QLKCNYCKNSFCSKPEILEWENKVHQFCSKTCSDDY) form an MYM-type 6 zinc finger. 2 MYM-type zinc fingers span residues 723-758 (RCVTCNYCSQLCKKGATKELDGVVRDFCSEDCCKKF) and 764-799 (KAARCDCCKSQGTLKERVQWRGEMKHFCDQHCLLRF). Glycyl lysine isopeptide (Lys-Gly) (interchain with G-Cter in SUMO2) cross-links involve residues lysine 764, lysine 788, lysine 812, and lysine 829. A phosphoserine mark is found at serine 838 and serine 958. Disordered regions lie at residues 983-1002 (LLKNSDPETQSSMPDVPYEP) and 1028-1064 (VFGEEYEEQPRPRSKKKGAKRKAVSGYQSHDDSSDNS). Over residues 1039–1050 (PRSKKKGAKRKA) the composition is skewed to basic residues. Serine 1064 bears the Phosphoserine mark. The residue at position 1376 (threonine 1376) is a Phosphothreonine.

In terms of assembly, can form homodimers. May be a component of a BHC histone deacetylase complex that contains HDAC1, HDAC2, HMG20B/BRAF35, KDM1A, RCOR1/CoREST, PHF21A/BHC80, ZMYM2, ZNF217, ZMYM3, GSE1 and GTF2I. Interacts with FOXP1 and FOXP2.

It localises to the nucleus. Its function is as follows. Involved in the negative regulation of transcription. The protein is Zinc finger MYM-type protein 2 (ZMYM2) of Homo sapiens (Human).